The primary structure comprises 292 residues: Insulin-like growth factor-binding protein 3 (292 aa).

The N-terminal stretch at Met-1 to Ala-27 is a signal peptide. Residues Pro-36–Ala-119 form the IGFBP N-terminal domain. Cystine bridges form between Cys-40-Cys-69, Cys-43-Cys-71, Cys-51-Cys-72, Cys-60-Cys-75, Cys-83-Cys-96, and Cys-90-Cys-116. 3 N-linked (GlcNAc...) asparagine glycosylation sites follow: Asn-118, Asn-124, and Asn-137. 2 disordered regions span residues Ala-127–Val-161 and Tyr-191–Tyr-211. Positions Leu-129 to Thr-139 are enriched in polar residues. Ser-149 is modified (phosphoserine). Positions Glu-192–Ser-203 are enriched in polar residues. Asn-200 carries N-linked (GlcNAc...) asparagine glycosylation. Ser-202 bears the Phosphoserine mark. Positions Tyr-211–Cys-286 constitute a Thyroglobulin type-1 domain. 3 cysteine pairs are disulfide-bonded: Cys-214/Cys-241, Cys-252/Cys-263, and Cys-265/Cys-286.

In terms of assembly, interacts with XLKD1. Binds IGF2 more than IGF1. Forms a ternary complex of about 140 to 150 kDa with IGF1 or IGF2 and a 85 kDa glycoprotein (ALS). Interacts with humanin; humanin competes with importin KPNB1 for binding to IGFBP3, blocking IGFBP3 nuclear import and IGFBP3-mediated apoptosis. Interacts with TMEM219. Interacts with RXRA; this interaction modulates the transcriptional activity of RXRA. Interacts with LRP1; this interaction mediates cell growth inhibition independent of IGF1. In terms of processing, phosphorylated by FAM20C in the extracellular medium. Phosphorylated by CK2; resulting in decreased nuclear localization.

It is found in the secreted. The protein resides in the nucleus. In terms of biological role, multifunctional protein that plays a critical role in regulating the availability of IGFs such as IGF1 and IGF2 to their receptors and thereby regulates IGF-mediated cellular processes including proliferation, differentiation, and apoptosis in a cell-type specific manner. Also exhibits IGF-independent antiproliferative and apoptotic effects mediated by its receptor TMEM219/IGFBP-3R. Inhibits the positive effect of humanin on insulin sensitivity. Promotes testicular germ cell apoptosis. Acts via LRP-1/alpha2M receptor, also known as TGF-beta type V receptor, to mediate cell growth inhibition independent of IGF1. Mechanistically, induces serine-specific dephosphorylation of IRS1 or IRS2 upon ligation to its receptor, leading to the inhibitory cascade. In the nucleus, interacts with transcription factors such as retinoid X receptor-alpha/RXRA to regulate transcriptional signaling and apoptosis. This Rattus norvegicus (Rat) protein is Insulin-like growth factor-binding protein 3 (Igfbp3).